Reading from the N-terminus, the 155-residue chain is UPF0266 membrane protein LMHCC_1856 (155 aa).

3 helical membrane-spanning segments follow: residues 8–28, 46–66, and 70–90; these read IFLF…DAVI, RWDG…NTFF, and PFST…ICFF.

The protein belongs to the UPF0266 family.

It localises to the cell membrane. This Listeria monocytogenes serotype 4a (strain HCC23) protein is UPF0266 membrane protein LMHCC_1856.